The primary structure comprises 153 residues: D-erythrulose-4-phosphate isomerase 1 (153 aa).

The Proton acceptor role is filled by cysteine 69.

Belongs to the LacAB/RpiB family.

The enzyme catalyses D-erythrulose 4-phosphate = D-erythrose 4-phosphate. The protein operates within carbohydrate metabolism; erythritol degradation. It participates in carbohydrate metabolism; D-threitol degradation. Catalyzes the isomerization of D-erythrulose-4P to D-erythrose-4P. Involved in the degradation pathways of erythritol and D-threitol, that allow M.smegmatis to grow on these compounds as the sole carbon source. The chain is D-erythrulose-4-phosphate isomerase 1 from Mycolicibacterium smegmatis (strain ATCC 700084 / mc(2)155) (Mycobacterium smegmatis).